Consider the following 371-residue polypeptide: Queuine tRNA-ribosyltransferase (371 aa).

Residue Asp90 is the Proton acceptor of the active site. Substrate contacts are provided by residues 90 to 94, Asp144, Gln189, and Gly215; that span reads DSGGF. Positions 246 to 252 are RNA binding; sequence GVGTPEN. Asp265 serves as the catalytic Nucleophile. The interval 270–274 is RNA binding; important for wobble base 34 recognition; it reads TRNAR. Cys303, Cys305, Cys308, and His334 together coordinate Zn(2+).

Belongs to the queuine tRNA-ribosyltransferase family. In terms of assembly, homodimer. Within each dimer, one monomer is responsible for RNA recognition and catalysis, while the other monomer binds to the replacement base PreQ1. Requires Zn(2+) as cofactor.

It carries out the reaction 7-aminomethyl-7-carbaguanine + guanosine(34) in tRNA = 7-aminomethyl-7-carbaguanosine(34) in tRNA + guanine. It functions in the pathway tRNA modification; tRNA-queuosine biosynthesis. In terms of biological role, catalyzes the base-exchange of a guanine (G) residue with the queuine precursor 7-aminomethyl-7-deazaguanine (PreQ1) at position 34 (anticodon wobble position) in tRNAs with GU(N) anticodons (tRNA-Asp, -Asn, -His and -Tyr). Catalysis occurs through a double-displacement mechanism. The nucleophile active site attacks the C1' of nucleotide 34 to detach the guanine base from the RNA, forming a covalent enzyme-RNA intermediate. The proton acceptor active site deprotonates the incoming PreQ1, allowing a nucleophilic attack on the C1' of the ribose to form the product. After dissociation, two additional enzymatic reactions on the tRNA convert PreQ1 to queuine (Q), resulting in the hypermodified nucleoside queuosine (7-(((4,5-cis-dihydroxy-2-cyclopenten-1-yl)amino)methyl)-7-deazaguanosine). The protein is Queuine tRNA-ribosyltransferase of Helicobacter pylori (strain Shi470).